The sequence spans 508 residues: MGLPWYRVHTVVLNDPGRLIAVHLMHTSLVSGWAGSMAFYELALFDPSDPILNPMWRQGMFVLPFMTRIGITQSWSNWSISGDSVVNPGIWSYEGVAASHIILSGLLFMAAIWHWVYWDLELFIDKRTMFPVLDLPKIFGIHLLLSGILCFGFGAFHVTGLFGPGIWVSDPYGLTGKVQQISPAWGADGFDPFNPGGVASHHIAAGILGIIAGLFHLSVRPSQRLYDALKMGNIETVLSSSIAAVFWAAFVVAGTMWYGSAATPIELFGPTRYQWDQGYFQQEIERRVQANIDNGNSIDKAWSLIPEKLAFYDYIGNNPAKGGLFRVGAMNSGDGIAVGWLGHPIFKDKLGNELFVRRMPTFFETFPVLLVDENGIVKADIPFRRAESKYSIEQVGVSATFYGGELNNATFTDPATVKKYARRAQLGEIFEFDRTTLKSDGVFRSSPRAWFTFGHLIFALLFFFGHIWHGARTLFRQVFAGIDPDLDEQIEFGTFLKLGDTSTRRQSV.

Helical transmembrane passes span 21 to 36 (AVHL…WAGS), 101 to 115 (IILS…IWHW), 140 to 156 (GIHL…FGAF), 203 to 218 (IAAG…FHLS), 237 to 252 (VLSS…AFVV), and 457 to 472 (IFAL…HGAR).

It belongs to the PsbB/PsbC family. PsbB subfamily. In terms of assembly, PSII is composed of 1 copy each of membrane proteins PsbA, PsbB, PsbC, PsbD, PsbE, PsbF, PsbH, PsbI, PsbJ, PsbK, PsbL, PsbM, PsbT, PsbY, PsbZ, Psb30/Ycf12, at least 3 peripheral proteins of the oxygen-evolving complex and a large number of cofactors. It forms dimeric complexes. The cofactor is Binds multiple chlorophylls. PSII binds additional chlorophylls, carotenoids and specific lipids..

The protein localises to the plastid. It is found in the chloroplast thylakoid membrane. Its function is as follows. One of the components of the core complex of photosystem II (PSII). It binds chlorophyll and helps catalyze the primary light-induced photochemical processes of PSII. PSII is a light-driven water:plastoquinone oxidoreductase, using light energy to abstract electrons from H(2)O, generating O(2) and a proton gradient subsequently used for ATP formation. The chain is Photosystem II CP47 reaction center protein from Bigelowiella natans (Pedinomonas minutissima).